The primary structure comprises 250 residues: Geranylgeranylglyceryl phosphate synthase (250 aa).

2 residues coordinate Mg(2+): Asp-26 and Ser-55. Residues 174–180 (YLEAGSG), 205–206 (GG), and 227–228 (GT) each bind sn-glycerol 1-phosphate.

Belongs to the GGGP/HepGP synthase family. Group II subfamily. The cofactor is Mg(2+).

Its subcellular location is the cytoplasm. It carries out the reaction sn-glycerol 1-phosphate + (2E,6E,10E)-geranylgeranyl diphosphate = sn-3-O-(geranylgeranyl)glycerol 1-phosphate + diphosphate. The protein operates within membrane lipid metabolism; glycerophospholipid metabolism. Prenyltransferase that catalyzes the transfer of the geranylgeranyl moiety of geranylgeranyl diphosphate (GGPP) to the C3 hydroxyl of sn-glycerol-1-phosphate (G1P). This reaction is the first ether-bond-formation step in the biosynthesis of archaeal membrane lipids. The protein is Geranylgeranylglyceryl phosphate synthase of Nitrosopumilus maritimus (strain SCM1).